The following is an 833-amino-acid chain: Probable serine/threonine-protein kinase DDB_G0277165 (833 aa).

Residues 9–262 (FIIGKTLGQG…IKEIKEHPWF (254 aa)) enclose the Protein kinase domain. Residues 15 to 23 (LGQGTTGKV) and K38 contribute to the ATP site. D133 functions as the Proton acceptor in the catalytic mechanism. One can recognise a UBA domain in the interval 288 to 329 (QIDEDIFRSLMALGVGTIDEVKQQLVSNQKSATLIYYRLLEE). The segment covering 338–351 (NKYGYKPKETRRNS) has biased composition (basic and acidic residues). Disordered stretches follow at residues 338-472 (NKYG…ISPS), 528-626 (QALQ…PIEI), and 764-799 (FINPVSPSKQHHHHHHQQQQPQQQQMPPLNLNGGQN). Composition is skewed to low complexity over residues 365–432 (NNNN…NNNN) and 441–459 (SSSQQPPHIQQPHSQQIPS). The span at 460–472 (NSTSQESMQISPS) shows a compositional bias: polar residues. Over residues 528–589 (QALQQHHQQQ…SSTSTSPQLS (62 aa)) the composition is skewed to low complexity. Over residues 600–625 (GSMTASTNPATSPTMSHRGKTSSPIE) the composition is skewed to polar residues.

This sequence belongs to the protein kinase superfamily. CAMK Ser/Thr protein kinase family.

The catalysed reaction is L-seryl-[protein] + ATP = O-phospho-L-seryl-[protein] + ADP + H(+). It carries out the reaction L-threonyl-[protein] + ATP = O-phospho-L-threonyl-[protein] + ADP + H(+). This is Probable serine/threonine-protein kinase DDB_G0277165 from Dictyostelium discoideum (Social amoeba).